A 160-amino-acid polypeptide reads, in one-letter code: Cytochrome b6-f complex subunit 4 (160 aa).

The next 3 helical transmembrane spans lie at 36 to 56, 95 to 115, and 131 to 151; these read LLYV…GLAV, LLGI…PFIE, and AVFL…TFPI.

It belongs to the cytochrome b family. PetD subfamily. As to quaternary structure, the 4 large subunits of the cytochrome b6-f complex are cytochrome b6, subunit IV (17 kDa polypeptide, PetD), cytochrome f and the Rieske protein, while the 4 small subunits are PetG, PetL, PetM and PetN. The complex functions as a dimer.

Its subcellular location is the cellular thylakoid membrane. Its function is as follows. Component of the cytochrome b6-f complex, which mediates electron transfer between photosystem II (PSII) and photosystem I (PSI), cyclic electron flow around PSI, and state transitions. This is Cytochrome b6-f complex subunit 4 from Crocosphaera subtropica (strain ATCC 51142 / BH68) (Cyanothece sp. (strain ATCC 51142)).